Consider the following 416-residue polypeptide: Peptide chain release factor subunit 1 (416 aa).

The protein belongs to the eukaryotic release factor 1 family. In terms of assembly, heterodimer of two subunits, one of which binds GTP.

Its subcellular location is the cytoplasm. In terms of biological role, directs the termination of nascent peptide synthesis (translation) in response to the termination codons UAA, UAG and UGA. This chain is Peptide chain release factor subunit 1, found in Halobacterium salinarum (strain ATCC 29341 / DSM 671 / R1).